The following is a 1249-amino-acid chain: Protein STU1 (1249 aa).

Low complexity-rich tracts occupy residues 138–156 and 555–574; these read LNSSGSLKAGSLSSSTATK and AASPMPSYASSSSTGAPSSA. Disordered stretches follow at residues 138-161, 545-619, 644-718, 755-846, 860-891, and 1084-1118; these read LNSSGSLKAGSLSSSTATKSKPHE, KQLE…NPVF, HVET…LGLG, AEHE…NGNI, AFQTPLNPKTSALRSSSAIRTPAWKDSPRPEA, and HPAPPSSSADNSDPMTSALSQLSLSSSKESPEKRT. Basic and acidic residues predominate over residues 581–600; sequence KKMDLKAMLAERRRAVKEAG. 2 stretches are compositionally biased toward low complexity: residues 647-667 and 708-718; these read TSSPSPVRSPTPSSSATRIRP and SPSLSPSLGLG. Basic and acidic residues predominate over residues 755–774; sequence AEHEVDELTLKEGQKTRDDG. 3 stretches are compositionally biased toward polar residues: residues 809–822, 831–844, and 863–878; these read QQGNTFSTSTSGRV, ATGTTASLPNSRNG, and TPLNPKTSALRSSSAI. Residues 1089-1111 show a composition bias toward low complexity; the sequence is SSSADNSDPMTSALSQLSLSSSK.

It belongs to the CLASP family. As to quaternary structure, interacts with microtubules.

The protein resides in the cytoplasm. It is found in the cytoskeleton. Its subcellular location is the nucleus. It localises to the spindle. Functionally, microtubule binding protein that promotes the stabilization of dynamic microtubules. Required for mitotic spindle formation. The chain is Protein STU1 (STU1) from Cryptococcus neoformans var. neoformans serotype D (strain JEC21 / ATCC MYA-565) (Filobasidiella neoformans).